A 331-amino-acid polypeptide reads, in one-letter code: Glucokinase (331 aa).

Residue glycine 16–threonine 21 participates in ATP binding.

Belongs to the bacterial glucokinase family.

The protein resides in the cytoplasm. The catalysed reaction is D-glucose + ATP = D-glucose 6-phosphate + ADP + H(+). In Pseudomonas aeruginosa (strain UCBPP-PA14), this protein is Glucokinase.